Here is a 245-residue protein sequence, read N- to C-terminus: Precorrin-2 C(20)-methyltransferase (245 aa).

The protein belongs to the precorrin methyltransferase family. In terms of assembly, homodimer.

The catalysed reaction is precorrin-2 + S-adenosyl-L-methionine = precorrin-3A + S-adenosyl-L-homocysteine + H(+). It participates in cofactor biosynthesis; adenosylcobalamin biosynthesis; cob(II)yrinate a,c-diamide from precorrin-2 (aerobic route): step 1/10. Methylates precorrin-2 at the C-20 position to produce precorrin-3A. In Sinorhizobium sp, this protein is Precorrin-2 C(20)-methyltransferase (cobI).